The sequence spans 1116 residues: Protein translocase subunit SecA (1116 aa).

ATP-binding positions include Gln177, 195–199 (GEGKT), and Asp692.

It belongs to the SecA family. Monomer and homodimer. Part of the essential Sec protein translocation apparatus which comprises SecA, SecYEG and auxiliary proteins SecDF. Other proteins may also be involved.

It is found in the cell inner membrane. Its subcellular location is the cytoplasm. The catalysed reaction is ATP + H2O + cellular proteinSide 1 = ADP + phosphate + cellular proteinSide 2.. Its function is as follows. Part of the Sec protein translocase complex. Interacts with the SecYEG preprotein conducting channel. Has a central role in coupling the hydrolysis of ATP to the transfer of proteins into and across the cell membrane, serving as an ATP-driven molecular motor driving the stepwise translocation of polypeptide chains across the membrane. The sequence is that of Protein translocase subunit SecA from Flavobacterium psychrophilum (strain ATCC 49511 / DSM 21280 / CIP 103535 / JIP02/86).